Reading from the N-terminus, the 525-residue chain is GMP synthase [glutamine-hydrolyzing] (525 aa).

In terms of domain architecture, Glutamine amidotransferase type-1 spans 9-207 (RILILDFGSQ…VRDICQCEAL (199 aa)). Catalysis depends on Cys86, which acts as the Nucleophile. Residues His181 and Glu183 contribute to the active site. Residues 208-400 (WTPAKIIDDA…LGLPYDMLYR (193 aa)) enclose the GMPS ATP-PPase domain. 235-241 (SGGVDSS) lines the ATP pocket.

As to quaternary structure, homodimer.

It carries out the reaction XMP + L-glutamine + ATP + H2O = GMP + L-glutamate + AMP + diphosphate + 2 H(+). The protein operates within purine metabolism; GMP biosynthesis; GMP from XMP (L-Gln route): step 1/1. Functionally, catalyzes the synthesis of GMP from XMP. This Escherichia coli O127:H6 (strain E2348/69 / EPEC) protein is GMP synthase [glutamine-hydrolyzing].